A 71-amino-acid polypeptide reads, in one-letter code: U3-agatoxin-Ao1a (71 aa).

The signal sequence occupies residues 1 to 20 (MKAVIFFCLLSVMVFTVIEA). Positions 21 to 33 (VKEEGTKPAEAAR) are excised as a propeptide. 4 disulfides stabilise this stretch: Cys35–Cys51, Cys42–Cys56, Cys50–Cys66, and Cys58–Cys64. Ser70 carries the serine amide modification.

Belongs to the neurotoxin 07 (Beta/delta-agtx) family. 01 (aga-2) subfamily. In terms of tissue distribution, expressed by the venom gland.

It is found in the secreted. Functionally, insecticidal neurotoxin that modulates the insect Nav channel (DmNaV1/tipE (para/tipE)) in a unique manner, with both the activation and inactivation processes being affected. The voltage dependence of activation is shifted toward more hyperpolarized potentials (analogous to site 4 toxins) and a non-inactivating persistent sodium current is induced (site 3-like action). Interestingly, both effects take place in a voltage-dependent manner, producing a bell-shaped curve between -80 and 0 mV. Compared to beta/delta-agatoxin-1 to -3, this toxin appears to affect the insect sodium channel only weakly. This Agelena orientalis (Funnel-web spider) protein is U3-agatoxin-Ao1a.